A 475-amino-acid chain; its full sequence is 3-isopropylmalate dehydratase large subunit (475 aa).

[4Fe-4S] cluster-binding residues include C348, C408, and C411.

It belongs to the aconitase/IPM isomerase family. LeuC type 1 subfamily. As to quaternary structure, heterodimer of LeuC and LeuD. The cofactor is [4Fe-4S] cluster.

It carries out the reaction (2R,3S)-3-isopropylmalate = (2S)-2-isopropylmalate. The protein operates within amino-acid biosynthesis; L-leucine biosynthesis; L-leucine from 3-methyl-2-oxobutanoate: step 2/4. Catalyzes the isomerization between 2-isopropylmalate and 3-isopropylmalate, via the formation of 2-isopropylmaleate. The chain is 3-isopropylmalate dehydratase large subunit from Acidobacterium capsulatum (strain ATCC 51196 / DSM 11244 / BCRC 80197 / JCM 7670 / NBRC 15755 / NCIMB 13165 / 161).